Consider the following 270-residue polypeptide: Formamidopyrimidine-DNA glycosylase (270 aa).

The active-site Schiff-base intermediate with DNA is Pro-2. The Proton donor role is filled by Glu-3. Lys-57 functions as the Proton donor; for beta-elimination activity in the catalytic mechanism. 3 residues coordinate DNA: His-90, Arg-109, and Lys-151. The segment at 236 to 270 (RVYGRKGQACEVCESEIQSVTLGQRNTFFCEQCQK) adopts an FPG-type zinc-finger fold. Residue Arg-260 is the Proton donor; for delta-elimination activity of the active site.

Belongs to the FPG family. Monomer. Zn(2+) is required as a cofactor.

The enzyme catalyses Hydrolysis of DNA containing ring-opened 7-methylguanine residues, releasing 2,6-diamino-4-hydroxy-5-(N-methyl)formamidopyrimidine.. It catalyses the reaction 2'-deoxyribonucleotide-(2'-deoxyribose 5'-phosphate)-2'-deoxyribonucleotide-DNA = a 3'-end 2'-deoxyribonucleotide-(2,3-dehydro-2,3-deoxyribose 5'-phosphate)-DNA + a 5'-end 5'-phospho-2'-deoxyribonucleoside-DNA + H(+). Involved in base excision repair of DNA damaged by oxidation or by mutagenic agents. Acts as a DNA glycosylase that recognizes and removes damaged bases. Has a preference for oxidized purines, such as 7,8-dihydro-8-oxoguanine (8-oxoG). Has AP (apurinic/apyrimidinic) lyase activity and introduces nicks in the DNA strand. Cleaves the DNA backbone by beta-delta elimination to generate a single-strand break at the site of the removed base with both 3'- and 5'-phosphates. This Pseudoalteromonas atlantica (strain T6c / ATCC BAA-1087) protein is Formamidopyrimidine-DNA glycosylase.